The primary structure comprises 331 residues: Lipoyl synthase (331 aa).

Polar residues predominate over residues 1–14 (MSTQLDASQPSNDV). The disordered stretch occupies residues 1 to 32 (MSTQLDASQPSNDVASPAAYDPTQKQKSQAKT). C78, C83, C89, C104, C108, C111, and S318 together coordinate [4Fe-4S] cluster. Positions 89-307 (CFGKGTATFM…EREAYAMGFS (219 aa)) constitute a Radical SAM core domain.

This sequence belongs to the radical SAM superfamily. Lipoyl synthase family. [4Fe-4S] cluster serves as cofactor.

It is found in the cytoplasm. The enzyme catalyses [[Fe-S] cluster scaffold protein carrying a second [4Fe-4S](2+) cluster] + N(6)-octanoyl-L-lysyl-[protein] + 2 oxidized [2Fe-2S]-[ferredoxin] + 2 S-adenosyl-L-methionine + 4 H(+) = [[Fe-S] cluster scaffold protein] + N(6)-[(R)-dihydrolipoyl]-L-lysyl-[protein] + 4 Fe(3+) + 2 hydrogen sulfide + 2 5'-deoxyadenosine + 2 L-methionine + 2 reduced [2Fe-2S]-[ferredoxin]. It functions in the pathway protein modification; protein lipoylation via endogenous pathway; protein N(6)-(lipoyl)lysine from octanoyl-[acyl-carrier-protein]: step 2/2. Functionally, catalyzes the radical-mediated insertion of two sulfur atoms into the C-6 and C-8 positions of the octanoyl moiety bound to the lipoyl domains of lipoate-dependent enzymes, thereby converting the octanoylated domains into lipoylated derivatives. The chain is Lipoyl synthase from Bordetella avium (strain 197N).